The chain runs to 177 residues: Large ribosomal subunit protein uL10 (177 aa).

It belongs to the universal ribosomal protein uL10 family. Part of the ribosomal stalk of the 50S ribosomal subunit. The N-terminus interacts with L11 and the large rRNA to form the base of the stalk. The C-terminus forms an elongated spine to which L12 dimers bind in a sequential fashion forming a multimeric L10(L12)X complex.

Functionally, forms part of the ribosomal stalk, playing a central role in the interaction of the ribosome with GTP-bound translation factors. This Xanthomonas axonopodis pv. citri (strain 306) protein is Large ribosomal subunit protein uL10.